The sequence spans 296 residues: MTITAAMVKELRQKTGAGMLDCKKALEETNGDIEAAATLLREKGIAKAAKKADRIAAEGLTSVVVKGNEAVLFELNSETDFVAKNKQFTDLIEELGNLFIESNVASVEEALSLKGASGKTVEEVILGATATIGEKISLRRVVRVKKTDAQGFGAYKHMGGRISVLTVLESANEELAKDLAMHITVFNPQFLSRKDVNQSTIEVETKVISEQIANDESLQGKPEKILNGILQGRLNKVLQEIVLLDQGFVKDPSITVANYLKSANNNILSYVRLEVGEGIEKKVDDFAAEVMAQVNK.

The tract at residues 79-82 (TDFV) is involved in Mg(2+) ion dislocation from EF-Tu.

Belongs to the EF-Ts family.

The protein localises to the cytoplasm. In terms of biological role, associates with the EF-Tu.GDP complex and induces the exchange of GDP to GTP. It remains bound to the aminoacyl-tRNA.EF-Tu.GTP complex up to the GTP hydrolysis stage on the ribosome. In Acholeplasma laidlawii (strain PG-8A), this protein is Elongation factor Ts.